The following is a 436-amino-acid chain: Ribulose bisphosphate carboxylase large chain (436 aa).

Substrate is bound by residues N104 and T154. K156 serves as the catalytic Proton acceptor. K158 is a binding site for substrate. Mg(2+) is bound by residues K182, D184, and E185. An N6-carboxylysine modification is found at K182. The Proton acceptor role is filled by H275. R276, H308, and S360 together coordinate substrate.

The protein belongs to the RuBisCO large chain family. Type I subfamily. In terms of assembly, heterohexadecamer of 8 large chains and 8 small chains. Requires Mg(2+) as cofactor.

Its subcellular location is the plastid. It is found in the chloroplast. The enzyme catalyses 2 (2R)-3-phosphoglycerate + 2 H(+) = D-ribulose 1,5-bisphosphate + CO2 + H2O. It carries out the reaction D-ribulose 1,5-bisphosphate + O2 = 2-phosphoglycolate + (2R)-3-phosphoglycerate + 2 H(+). Functionally, ruBisCO catalyzes two reactions: the carboxylation of D-ribulose 1,5-bisphosphate, the primary event in carbon dioxide fixation, as well as the oxidative fragmentation of the pentose substrate in the photorespiration process. Both reactions occur simultaneously and in competition at the same active site. In Euglena viridis (Cercaria viridis), this protein is Ribulose bisphosphate carboxylase large chain.